We begin with the raw amino-acid sequence, 126 residues long: Small ribosomal subunit protein uS8 (126 aa).

This sequence belongs to the universal ribosomal protein uS8 family. As to quaternary structure, part of the 30S ribosomal subunit. Contacts proteins S5 and S12.

Functionally, one of the primary rRNA binding proteins, it binds directly to 16S rRNA central domain where it helps coordinate assembly of the platform of the 30S subunit. The chain is Small ribosomal subunit protein uS8 from Desulfovibrio desulfuricans (strain ATCC 27774 / DSM 6949 / MB).